Reading from the N-terminus, the 720-residue chain is Pro-neuregulin-3, membrane-bound isoform (720 aa).

Residues Met1 to Gln360 are Extracellular-facing. Disordered stretches follow at residues Ala28–Pro48, Ser119–Ser223, and Pro246–Ser280. Gly residues predominate over residues Ala34–Gly44. Residues Thr127–Ser148 show a composition bias toward low complexity. Over residues Arg149–Arg163 the composition is skewed to polar residues. Low complexity-rich tracts occupy residues Thr187–Thr205 and Ala250–Ser271. The region spanning His286–Asp329 is the EGF-like domain. Disulfide bonds link Cys290/Cys304, Cys298/Cys317, and Cys319/Cys328. Residues Val361 to Phe381 form a helical membrane-spanning segment. The Cytoplasmic portion of the chain corresponds to Tyr382–Lys720. Residues Pro451 to Gln481 are disordered.

The protein belongs to the neuregulin family. As to quaternary structure, interacts with ERBB4. Post-translationally, proteolytic cleavage close to the plasma membrane on the external face leads to the release of the soluble growth factor form. In terms of processing, extensive glycosylation precedes the proteolytic cleavage. Isoform 3 is glycosylated. In terms of tissue distribution, highly expressed in most regions of the brain with the exception of corpus callosum. Expressed at lower level in testis. Not detected in heart, placenta, lung, liver, skeletal muscle, kidney, pancreas, spleen, thymus, prostate, ovary, small intestine, colon and peripheral blood leukocytes.

The protein localises to the cell membrane. The protein resides in the secreted. Functionally, direct ligand for the ERBB4 tyrosine kinase receptor. Binding results in ligand-stimulated tyrosine phosphorylation and activation of the receptor. Does not bind to the EGF receptor, ERBB2 or ERBB3 receptors. May be a survival factor for oligodendrocytes. The protein is Pro-neuregulin-3, membrane-bound isoform (NRG3) of Homo sapiens (Human).